Reading from the N-terminus, the 316-residue chain is Beta-agarase (316 aa).

An N-terminal signal peptide occupies residues Met-1 to Ala-18. The region spanning Tyr-27–Glu-315 is the GH16 domain. Residues Trp-78, Gln-87–Phe-97, and Arg-101–Ser-103 contribute to the substrate site. Glu-167 acts as the Nucleophile in catalysis. Glu-172 acts as the Proton donor in catalysis. Position 197 (Arg-197) interacts with substrate.

It belongs to the glycosyl hydrolase 16 family.

It catalyses the reaction Hydrolysis of (1-&gt;4)-beta-D-galactosidic linkages in agarose, giving the tetramer as the predominant product.. Cleaves the beta-1,4-linkages between beta-D-galactose and alpha-L-3,6-anhydro-galactose residues in agarose. Cleaves agarose in a random manner with retention of the anomeric-bond configuration, producing beta-anomers that give rise progressively to alpha-anomers when mutarotation takes place. The sequence is that of Beta-agarase from Phocaeicola plebeius (strain DSM 17135 / JCM 12973 / CCUG 54634 / M2) (Bacteroides plebeius).